A 100-amino-acid polypeptide reads, in one-letter code: Small ribosomal subunit protein uS14c (100 aa).

The segment at 1–54 (MARKSLIQRERKRQKLEQKFHSIRRSSKKEISKVSSLSGKWEIHGKLQSPPRNS) is disordered.

It belongs to the universal ribosomal protein uS14 family. In terms of assembly, part of the 30S ribosomal subunit.

It is found in the plastid. It localises to the chloroplast. Functionally, binds 16S rRNA, required for the assembly of 30S particles. The protein is Small ribosomal subunit protein uS14c of Piper cenocladum (Ant piper).